The following is a 211-amino-acid chain: Prolactin-1 (211 aa).

An N-terminal signal peptide occupies residues 1–23; the sequence is MARRSQGTKLHLAVLCLVVSCHA. 2 cysteine pairs are disulfide-bonded: cysteine 69/cysteine 184 and cysteine 201/cysteine 211.

It belongs to the somatotropin/prolactin family.

The protein localises to the secreted. The protein is Prolactin-1 (prl1) of Oncorhynchus keta (Chum salmon).